The following is a 224-amino-acid chain: Voltage-dependent calcium channel gamma-1 subunit (224 aa).

Over 1–10 the chain is Cytoplasmic; the sequence is MSQTKALKVR. The chain crosses the membrane as a helical span at residues 11-29; it reads VTLFCILVGIVLALVAVVT. Residues 30-110 are Extracellular-facing; that stretch reads DHWAVLSPHV…TQKEYSISAA (81 aa). 2 N-linked (GlcNAc...) asparagine glycosylation sites follow: N43 and N81. A disulfide bridge connects residues C57 and C82. The chain crosses the membrane as a helical span at residues 111 to 131; that stretch reads AIAIFSLGFIILGTICGLLSF. The Cytoplasmic portion of the chain corresponds to 132–136; it reads RKKRD. A helical membrane pass occupies residues 137–157; that stretch reads YLLRPASMFYAFAGLCIFVSV. Over 158–181 the chain is Extracellular; it reads EVMRQSVKRMIDSEDTVWIDYYYG. The chain crosses the membrane as a helical span at residues 182–206; the sequence is WSFACACAAFILLFLGGIALLLFSL. The Cytoplasmic portion of the chain corresponds to 207–224; the sequence is PRMPQYPWESCMDAEPEH.

It belongs to the PMP-22/EMP/MP20 family. CACNG subfamily. As to quaternary structure, component of a calcium channel complex consisting of a pore-forming alpha subunit (CACNA1S) and the ancillary subunits CACNB1 or CACNB2, CACNG1 and CACNA2D1. The channel complex contains alpha, beta, gamma and delta subunits in a 1:1:1:1 ratio, i.e. it contains either CACNB1 or CACNB2. N-glycosylated.

The protein localises to the cell membrane. It localises to the sarcolemma. In terms of biological role, regulatory subunit of the voltage-gated calcium channel that gives rise to L-type calcium currents in skeletal muscle. Regulates channel inactivation kinetics. The sequence is that of Voltage-dependent calcium channel gamma-1 subunit (CACNG1) from Sus scrofa (Pig).